A 164-amino-acid polypeptide reads, in one-letter code: 17.8 kDa class II heat shock protein (164 aa).

In terms of domain architecture, sHSP spans 48–164 (DARAMAATPA…KPKTIEVKVA (117 aa)).

It belongs to the small heat shock protein (HSP20) family.

The protein localises to the cytoplasm. In Zea mays (Maize), this protein is 17.8 kDa class II heat shock protein.